Here is a 302-residue protein sequence, read N- to C-terminus: GTPase Era (302 aa).

The region spanning 9–177 (YCGFIAIVGR…EKIVRQSLRE (169 aa)) is the Era-type G domain. Residues 17-24 (GRPNVGKS) form a G1 region. Position 17–24 (17–24 (GRPNVGKS)) interacts with GTP. The G2 stretch occupies residues 43–47 (QTTRH). The interval 64–67 (DTPG) is G3. GTP is bound by residues 64 to 68 (DTPGL) and 126 to 129 (NKVD). The G4 stretch occupies residues 126–129 (NKVD). Residues 156–158 (ISA) are G5. In terms of domain architecture, KH type-2 spans 208 to 285 (TGEELPYSVT…HLELWVKVKS (78 aa)).

Belongs to the TRAFAC class TrmE-Era-EngA-EngB-Septin-like GTPase superfamily. Era GTPase family. As to quaternary structure, monomer.

The protein localises to the cytoplasm. The protein resides in the cell inner membrane. Functionally, an essential GTPase that binds both GDP and GTP, with rapid nucleotide exchange. Plays a role in 16S rRNA processing and 30S ribosomal subunit biogenesis and possibly also in cell cycle regulation and energy metabolism. The chain is GTPase Era from Haemophilus influenzae (strain PittGG).